The following is a 775-amino-acid chain: Glycerol-3-phosphate acyltransferase (775 aa).

The short motif at 268 to 273 (HRSYID) is the HXXXXD motif element.

Belongs to the GPAT/DAPAT family.

Its subcellular location is the cell membrane. The enzyme catalyses sn-glycerol 3-phosphate + an acyl-CoA = a 1-acyl-sn-glycero-3-phosphate + CoA. It participates in phospholipid metabolism; CDP-diacylglycerol biosynthesis; CDP-diacylglycerol from sn-glycerol 3-phosphate: step 1/3. The polypeptide is Glycerol-3-phosphate acyltransferase (plsB) (Mycobacterium leprae (strain TN)).